The following is a 286-amino-acid chain: Shikimate dehydrogenase (NADP(+)) (286 aa).

Shikimate-binding positions include 22–24 (SRS) and Thr-71. Lys-75 (proton acceptor) is an active-site residue. Residue Glu-87 coordinates NADP(+). Shikimate contacts are provided by Asn-96 and Asp-111. NADP(+) contacts are provided by residues 136 to 140 (GAGGA), 160 to 165 (NRTVER), and Ile-225. Tyr-227 is a binding site for shikimate. Gly-248 lines the NADP(+) pocket.

Belongs to the shikimate dehydrogenase family. As to quaternary structure, homodimer.

The enzyme catalyses shikimate + NADP(+) = 3-dehydroshikimate + NADPH + H(+). The protein operates within metabolic intermediate biosynthesis; chorismate biosynthesis; chorismate from D-erythrose 4-phosphate and phosphoenolpyruvate: step 4/7. In terms of biological role, involved in the biosynthesis of the chorismate, which leads to the biosynthesis of aromatic amino acids. Catalyzes the reversible NADPH linked reduction of 3-dehydroshikimate (DHSA) to yield shikimate (SA). This chain is Shikimate dehydrogenase (NADP(+)), found in Rhizobium rhizogenes (strain K84 / ATCC BAA-868) (Agrobacterium radiobacter).